The following is a 163-amino-acid chain: Secreted RxLR effector protein 135 (163 aa).

Residues 1–20 (MRRLYLFVLILATFLTTSHG) form the signal peptide. The short motif at 33-45 (RGLQEEAGEDEER) is the RxLR-dEER element. The tract at residues 94 to 127 (KNAGKPKRQTPQIAATGPAKPKVQSPEEAAAVPG) is disordered.

The protein belongs to the RxLR effector family.

The protein resides in the secreted. Its subcellular location is the host nucleus. It is found in the host cytoplasm. Functionally, secreted effector that completely suppresses the host cell death induced by cell death-inducing proteins. In Plasmopara viticola (Downy mildew of grapevine), this protein is Secreted RxLR effector protein 135.